Reading from the N-terminus, the 50-residue chain is Peroxiredoxin-6 (50 aa).

In terms of domain architecture, Thioredoxin spans 1–50 (DFTPVCTTELGRLAPEFAKRVVFIFGPDKKLKLSILYPATTGRNFDEILR). The residue at position 3 (threonine 3) is a Phosphothreonine. Cysteine 6 serves as the catalytic Cysteine sulfenic acid (-SOH) intermediate; for peroxidase activity. Lysine 19 bears the N6-acetyllysine mark. Residue aspartate 28 is the For phospholipase activity of the active site.

It belongs to the peroxiredoxin family. Prx6 subfamily. Homodimer. Interacts with GSTP1; mediates PRDX6 glutathionylation and regeneration. Interacts with APEX1. Interacts with STH. May interact with FAM168B. May interact with HTR2A. In terms of processing, irreversibly inactivated by overoxidation of Cys-6 to sulfinic acid (Cys-SO(2)H) and sulfonic acid (Cys-SO(3)H) forms upon oxidative stress. Post-translationally, phosphorylation at Thr-177 by MAP kinases increases the phospholipase activity of the enzyme. The phosphorylated form exhibits a greater lysophosphatidylcholine acyltransferase activity compared to the non-phosphorylated form.

It is found in the cytoplasm. It localises to the lysosome. The catalysed reaction is a hydroperoxide + 2 glutathione = an alcohol + glutathione disulfide + H2O. It catalyses the reaction a 1,2-diacyl-sn-glycero-3-phosphocholine + H2O = a 1-acyl-sn-glycero-3-phosphocholine + a fatty acid + H(+). The enzyme catalyses a 1-acyl-sn-glycero-3-phosphocholine + an acyl-CoA = a 1,2-diacyl-sn-glycero-3-phosphocholine + CoA. It carries out the reaction 1-hexadecanoyl-sn-glycero-3-phosphocholine + hexadecanoyl-CoA = 1,2-dihexadecanoyl-sn-glycero-3-phosphocholine + CoA. The catalysed reaction is 1,2-dihexadecanoyl-sn-glycero-3-phosphocholine + H2O = 1-hexadecanoyl-sn-glycero-3-phosphocholine + hexadecanoate + H(+). In terms of biological role, thiol-specific peroxidase that catalyzes the reduction of hydrogen peroxide and organic hydroperoxides to water and alcohols, respectively. Can reduce H(2)O(2) and short chain organic, fatty acid, and phospholipid hydroperoxides. Also has phospholipase activity, and can therefore either reduce the oxidized sn-2 fatty acyl group of phospholipids (peroxidase activity) or hydrolyze the sn-2 ester bond of phospholipids (phospholipase activity). These activities are dependent on binding to phospholipids at acidic pH and to oxidized phospholipds at cytosolic pH. Plays a role in cell protection against oxidative stress by detoxifying peroxides and in phospholipid homeostasis. Exhibits acyl-CoA-dependent lysophospholipid acyltransferase which mediates the conversion of lysophosphatidylcholine (1-acyl-sn-glycero-3-phosphocholine or LPC) into phosphatidylcholine (1,2-diacyl-sn-glycero-3-phosphocholine or PC). Shows a clear preference for LPC as the lysophospholipid and for palmitoyl CoA as the fatty acyl substrate. The protein is Peroxiredoxin-6 of Mesocricetus auratus (Golden hamster).